The following is a 428-amino-acid chain: 3-phosphoshikimate 1-carboxyvinyltransferase (428 aa).

3-phosphoshikimate is bound by residues Lys20, Ser21, and Arg25. Lys20 provides a ligand contact to phosphoenolpyruvate. Positions 92 and 120 each coordinate phosphoenolpyruvate. Residues Ser166, Gln168, Asp314, and Lys341 each contribute to the 3-phosphoshikimate site. Gln168 provides a ligand contact to phosphoenolpyruvate. Asp314 functions as the Proton acceptor in the catalytic mechanism. Residues Arg345 and Arg387 each contribute to the phosphoenolpyruvate site.

Belongs to the EPSP synthase family. In terms of assembly, monomer.

The protein localises to the cytoplasm. It carries out the reaction 3-phosphoshikimate + phosphoenolpyruvate = 5-O-(1-carboxyvinyl)-3-phosphoshikimate + phosphate. The protein operates within metabolic intermediate biosynthesis; chorismate biosynthesis; chorismate from D-erythrose 4-phosphate and phosphoenolpyruvate: step 6/7. Catalyzes the transfer of the enolpyruvyl moiety of phosphoenolpyruvate (PEP) to the 5-hydroxyl of shikimate-3-phosphate (S3P) to produce enolpyruvyl shikimate-3-phosphate and inorganic phosphate. This chain is 3-phosphoshikimate 1-carboxyvinyltransferase, found in Listeria innocua serovar 6a (strain ATCC BAA-680 / CLIP 11262).